The chain runs to 104 residues: Vegetative-specific protein H7 (104 aa).

In terms of domain architecture, HTH cro/C1-type spans 43 to 97; that stretch reads IQRARNALKMTQKELAFKINERPGVINEYESGSAIPSQAVLSKLEKALNVKLRGK. The segment at residues 54-73 is a DNA-binding region (H-T-H motif); sequence QKELAFKINERPGVINEYES.

The sequence is that of Vegetative-specific protein H7 (cinD-1) from Dictyostelium discoideum (Social amoeba).